A 271-amino-acid chain; its full sequence is MNLDVEQKAPLVEHLIELRNRLMISVGAIIVGFILCYSFSEQIFEFLAAPLHEILGPQAKMIYTALHEAFFTQIKVSFFAGLFLAMPVLFTQMWLFIAPGLYQHERSAILPFLFVTPVLFFMGGTLAYYFVFPLAFKFFLGFQSSTIEALPSMREYLSLVIKLIIAFGITFELPVGLLLAIKAGVVSTAGLVDKRKYNIVLAFVAAAILTPPDPFTQVMLAIPIMLMYEISIFFGRGIERKRAEQEAAEEAQWAADHNVDDDDVDHPEHKA.

The next 5 membrane-spanning stretches (helical) occupy residues Ile-24 to Phe-44, Phe-78 to Ala-98, Phe-112 to Phe-132, Leu-159 to Leu-179, and Phe-215 to Gly-235. The interval Ala-247–Ala-271 is disordered.

Belongs to the TatC family. In terms of assembly, the Tat system comprises two distinct complexes: a TatABC complex, containing multiple copies of TatA, TatB and TatC subunits, and a separate TatA complex, containing only TatA subunits. Substrates initially bind to the TatABC complex, which probably triggers association of the separate TatA complex to form the active translocon.

It localises to the cell inner membrane. Part of the twin-arginine translocation (Tat) system that transports large folded proteins containing a characteristic twin-arginine motif in their signal peptide across membranes. Together with TatB, TatC is part of a receptor directly interacting with Tat signal peptides. The sequence is that of Sec-independent protein translocase protein TatC from Magnetococcus marinus (strain ATCC BAA-1437 / JCM 17883 / MC-1).